The chain runs to 598 residues: MDNTNRPHLNLGTNDTRMAPNDRTYPTTPSTFPQPVFPGQQAGGSQQYNQAYAQSGNYYQQNHNDPNTGLAHQFAHQNIGSAGRASPYGSRGPSPAQRPRTSGNSGQQQTYGNYLSAPMPSNTQTEFAPAPERNPDKYGPNANNNQKKCSQLASDFFKDSVKRARERNQRQSEMEQKLGETNDARRRESIWSTAGRKEGQYLRFLRTKDKPENYQTIKIIGKGAFGEVKLVQKKADGKVYAMKSLIKTEMFKKDQLAHVRAERDILAESDSPWVVKLYTTFQDANFLYMLMEFLPGGDLMTMLIKYEIFSEDITRFYIAEIVLAIDAVHKLGFIHRDIKPDNILLDRGGHVKLTDFGLSTGFHKLHDNNYYTQLLQGKSNKPRDNRNSVAIDQINLTVSNRAQINDWRRSRRLMAYSTVGTPDYIAPEIFTGHGYSFDCDWWSLGTIMFECLVGWPPFCAEDSHDTYRKIVNWRHSLYFPDDITLGVDAENLIRSLICNTENRLGRGGAHEIKSHAFFRGVEFDSLRRIRAPFEPRLTSAIDTTYFPTDEIDQTDNATLLKAQQAARGAAAPAQQEESPELSLPFIGYTFKRFDNNFR.

Composition is skewed to polar residues over residues 1–16, 24–33, and 99–126; these read MDNTNRPHLNLGTNDT, TYPTTPSTFP, and PRTSGNSGQQQTYGNYLSAPMPSNTQTE. 3 disordered regions span residues 1–46, 80–148, and 163–190; these read MDNT…GGSQ, GSAG…NQKK, and RARERNQRQSEMEQKLGETNDARRRESI. The Protein kinase domain maps to 214-518; it reads YQTIKIIGKG…AHEIKSHAFF (305 aa). Residues 220 to 228 and K243 contribute to the ATP site; that span reads IGKGAFGEV. D337 functions as the Proton acceptor in the catalytic mechanism. In terms of domain architecture, AGC-kinase C-terminal spans 519 to 598; sequence RGVEFDSLRR…TFKRFDNNFR (80 aa).

Belongs to the protein kinase superfamily. STE Ser/Thr protein kinase family. COT1 subfamily.

The enzyme catalyses L-seryl-[protein] + ATP = O-phospho-L-seryl-[protein] + ADP + H(+). It catalyses the reaction L-threonyl-[protein] + ATP = O-phospho-L-threonyl-[protein] + ADP + H(+). Its function is as follows. Protein kinase required for hyphal elongation. This is Serine/threonine-protein kinase cot-1 (cot-1) from Neurospora crassa (strain ATCC 24698 / 74-OR23-1A / CBS 708.71 / DSM 1257 / FGSC 987).